The following is a 120-amino-acid chain: Crustacean hyperglycemic hormones 2 (120 aa).

The N-terminal stretch at 1–27 (MIAFHMVWSALLASLLLLLLAPSASPV) is a signal peptide. 3 disulfide bridges follow: Cys-53-Cys-89, Cys-69-Cys-85, and Cys-72-Cys-98. The residue at position 118 (Val-118) is a Valine amide.

The protein belongs to the arthropod CHH/MIH/GIH/VIH hormone family.

The protein localises to the secreted. Its function is as follows. Hormone found in the sinus gland of isopods and decapods which controls the blood sugar level. Has a secretagogue action over the amylase released from the midgut gland. May act as a stress hormone and may be involved in the control of molting and reproduction. The sequence is that of Crustacean hyperglycemic hormones 2 from Penaeus japonicus (Kuruma prawn).